The chain runs to 631 residues: Peptidyl-prolyl cis-trans isomerase CYP71 (631 aa).

The segment at 26–45 (VEEEEPMVGPGPAPRGKRKR) is disordered. WD repeat units follow at residues 68–106 (MHRD…IEFA), 111–150 (SHLG…MMAM), 201–240 (IHMN…FPED), and 257–297 (KCKT…RRVY). The PPIase cyclophilin-type domain maps to 474-628 (LPENVIMHTT…QDVKILNVTV (155 aa)).

Belongs to the cyclophilin-type PPIase family. In terms of assembly, interacts with FAS1 and LHP1. Interacts (via WD repeat domain) with histone H3. As to expression, ubiquitous. Expressed in the meristems.

The protein localises to the nucleus. It catalyses the reaction [protein]-peptidylproline (omega=180) = [protein]-peptidylproline (omega=0). PPIases accelerate the folding of proteins. It catalyzes the cis-trans isomerization of proline imidic peptide bonds in oligopeptides. Histone proline isomerase that increases the rate of cis-trans isomerization of the synthetic histone H3 peptides H3P30 (RKSAP30F-p-nitroanilide) and H3P30K27me3 (RKme3-SAP30F-p-nitroanilide) in the histone H3 N-terminal tail, in vitro. Histone remodeling factor involved in chromatin-based gene silencing. Reinforces H3K27 methylation. Involved in fundamental processes of chromatin assembly and histone modification by mediating the targeting of FAS1 and LHP1 on the chromatin. Required for the formation and development of leaves, for normal phyllotaxy and for the formation, maintenance and activity of root and shoot apical meristems. This is Peptidyl-prolyl cis-trans isomerase CYP71 from Arabidopsis thaliana (Mouse-ear cress).